Reading from the N-terminus, the 256-residue chain is 2-C-methyl-D-erythritol 4-phosphate cytidylyltransferase (256 aa).

Belongs to the IspD/TarI cytidylyltransferase family. IspD subfamily.

The catalysed reaction is 2-C-methyl-D-erythritol 4-phosphate + CTP + H(+) = 4-CDP-2-C-methyl-D-erythritol + diphosphate. Its pathway is isoprenoid biosynthesis; isopentenyl diphosphate biosynthesis via DXP pathway; isopentenyl diphosphate from 1-deoxy-D-xylulose 5-phosphate: step 2/6. Catalyzes the formation of 4-diphosphocytidyl-2-C-methyl-D-erythritol from CTP and 2-C-methyl-D-erythritol 4-phosphate (MEP). This Corynebacterium glutamicum (strain ATCC 13032 / DSM 20300 / JCM 1318 / BCRC 11384 / CCUG 27702 / LMG 3730 / NBRC 12168 / NCIMB 10025 / NRRL B-2784 / 534) protein is 2-C-methyl-D-erythritol 4-phosphate cytidylyltransferase.